The following is a 377-amino-acid chain: Beta sliding clamp (377 aa).

The protein belongs to the beta sliding clamp family. In terms of assembly, forms a ring-shaped head-to-tail homodimer around DNA which binds and tethers DNA polymerases and other proteins to the DNA. The DNA replisome complex has a single clamp-loading complex (3 tau and 1 each of delta, delta', psi and chi subunits) which binds 3 Pol III cores (1 core on the leading strand and 2 on the lagging strand) each with a beta sliding clamp dimer. Additional proteins in the replisome are other copies of gamma, psi and chi, Ssb, DNA helicase and RNA primase.

The protein resides in the cytoplasm. Confers DNA tethering and processivity to DNA polymerases and other proteins. Acts as a clamp, forming a ring around DNA (a reaction catalyzed by the clamp-loading complex) which diffuses in an ATP-independent manner freely and bidirectionally along dsDNA. Initially characterized for its ability to contact the catalytic subunit of DNA polymerase III (Pol III), a complex, multichain enzyme responsible for most of the replicative synthesis in bacteria; Pol III exhibits 3'-5' exonuclease proofreading activity. The beta chain is required for initiation of replication as well as for processivity of DNA replication. The sequence is that of Beta sliding clamp (dnaN) from Staphylococcus aureus (strain COL).